Consider the following 977-residue polypeptide: AP-2 complex subunit alpha-1 (977 aa).

The interval 614–702 (AKLKRKKGPG…PSLGPTPEEA (89 aa)) is disordered. Phosphoserine is present on residues Ser-626 and Ser-652. Positions 646-657 (PTPSTVSTPSPS) are enriched in low complexity. Thr-653 bears the Phosphothreonine mark. Phosphoserine is present on Ser-655. Positions 666–675 (APPPAAPPAP) are enriched in pro residues.

It belongs to the adaptor complexes large subunit family. In terms of assembly, adaptor protein complex 2 (AP-2) is a heterotetramer composed of two large adaptins (alpha-type subunit AP2A1 or AP2A2 and beta-type subunit AP2B1), a medium adaptin (mu-type subunit AP2M1) and a small adaptin (sigma-type subunit AP2S1). Interacts with HIP1 and RAB11FIP2. Interacts with SLC12A5. Interacts with clathrin. Interacts with SGIP1. Interacts with RFTN1. Interacts with KIAA1107. Interacts with PICALM. Together with AP2B1 and AP2M1, it interacts with ADAM10; this interaction facilitates ADAM10 endocytosis from the plasma membrane during long-term potentiation in hippocampal neurons. Interacts with ABCB11; this interaction regulates cell membrane expression of ABCB11 through its internalization in a clathrin-dependent manner and its subsequent degradation. Probably interacts with ACE2 (via endocytic sorting signal motif); the interaction is inhibited by ACE2 phosphorylation. Expressed in the brain (at protein level). Isoform A: Expressed only in neuronal tissue and skeletal muscle. Isoform B: Widely expressed.

The protein resides in the cell membrane. Its subcellular location is the membrane. The protein localises to the coated pit. Functionally, component of the adaptor protein complex 2 (AP-2). Adaptor protein complexes function in protein transport via transport vesicles in different membrane traffic pathways. Adaptor protein complexes are vesicle coat components and appear to be involved in cargo selection and vesicle formation. AP-2 is involved in clathrin-dependent endocytosis in which cargo proteins are incorporated into vesicles surrounded by clathrin (clathrin-coated vesicles, CCVs) which are destined for fusion with the early endosome. The clathrin lattice serves as a mechanical scaffold but is itself unable to bind directly to membrane components. Clathrin-associated adaptor protein (AP) complexes which can bind directly to both the clathrin lattice and to the lipid and protein components of membranes are considered to be the major clathrin adaptors contributing the CCV formation. AP-2 also serves as a cargo receptor to selectively sort the membrane proteins involved in receptor-mediated endocytosis. AP-2 seems to play a role in the recycling of synaptic vesicle membranes from the presynaptic surface. AP-2 recognizes Y-X-X-[FILMV] (Y-X-X-Phi) and [ED]-X-X-X-L-[LI] endocytosis signal motifs within the cytosolic tails of transmembrane cargo molecules. AP-2 may also play a role in maintaining normal post-endocytic trafficking through the ARF6-regulated, non-clathrin pathway. The AP-2 alpha subunit binds polyphosphoinositide-containing lipids, positioning AP-2 on the membrane. During long-term potentiation in hippocampal neurons, AP-2 is responsible for the endocytosis of ADAM10. The AP-2 alpha subunit acts via its C-terminal appendage domain as a scaffolding platform for endocytic accessory proteins. The AP-2 alpha and AP-2 sigma subunits are thought to contribute to the recognition of the [ED]-X-X-X-L-[LI] motif. This chain is AP-2 complex subunit alpha-1 (Ap2a1), found in Mus musculus (Mouse).